We begin with the raw amino-acid sequence, 336 residues long: Calcium uniporter regulatory subunit MCUb, mitochondrial (336 aa).

A mitochondrion-targeting transit peptide spans 1-35; the sequence is MLQRGLWPWRTRLLPTPGTWRPARPWPLPPPPQVL. Residues 179 to 210 adopt a coiled-coil conformation; that stretch reads ESQKKREHHLLEKIDHLKEQLQPLEQVKAGIE. 2 helical membrane passes run 220–240 and 250–270; these read LLWA…WLTW and PVTY…FIVT. Residues 297–323 are a coiled coil; that stretch reads FDVQQYNKLKEDLAKAKESLKQARHSL.

The protein belongs to the MCU (TC 1.A.77) family. As to quaternary structure, homooligomer. Associates with the uniplex complex, composed of MCU, MICU1, MICU2 and EMRE/SMDT1, inhibiting its activity.

The protein resides in the mitochondrion inner membrane. Its function is as follows. Negative regulator of the mitochondrial calcium uniporter (MCU), a channel that mediates calcium uptake into the mitochondrial matrix. MCUB is required to limit mitochondrial calcium overload during stress. Acts as a dominant-negative regulator that displaces MCU from the functional uniplex complex and thereby decreases the association of calcium sensors MICU1 and MICU2, preventing channel gating. Mitochondrial calcium homeostasis plays key roles in mitochondrial metabolism. Acts as an important regulator of mitochondrial metabolism in response to stress in muscle cells: induced in response to fasting, leading to restrict mitochondrial calcium uptake, resulting in reprogramming of mitochondria toward fatty acid oxidation preference. Acts as a regulator of macrophage polarization during skeletal muscle regeneration: inhibition of mitochondrial calcium uptake drives differentiation of macrophages with anti-inflammatory profile, promoting the differentiation and fusion of satellite cells. This is Calcium uniporter regulatory subunit MCUb, mitochondrial from Homo sapiens (Human).